The primary structure comprises 391 residues: 1-deoxy-D-xylulose 5-phosphate reductoisomerase (391 aa).

Asn109 contributes to the NADPH binding site. Residue Lys110 coordinates 1-deoxy-D-xylulose 5-phosphate. Position 111 (Glu111) interacts with NADPH. Asp135 contributes to the Mn(2+) binding site. Ser136, Glu137, Ser171, and His194 together coordinate 1-deoxy-D-xylulose 5-phosphate. Glu137 contacts Mn(2+). Gly200 provides a ligand contact to NADPH. Ser207, Asn212, Arg213, and Glu216 together coordinate 1-deoxy-D-xylulose 5-phosphate. Glu216 lines the Mn(2+) pocket.

This sequence belongs to the DXR family. In terms of assembly, homodimer. It depends on Mg(2+) as a cofactor. Mn(2+) is required as a cofactor.

The catalysed reaction is 2-C-methyl-D-erythritol 4-phosphate + NADP(+) = 1-deoxy-D-xylulose 5-phosphate + NADPH + H(+). It functions in the pathway isoprenoid biosynthesis; isopentenyl diphosphate biosynthesis via DXP pathway; isopentenyl diphosphate from 1-deoxy-D-xylulose 5-phosphate: step 1/6. Functionally, catalyzes the NADPH-dependent rearrangement and reduction of 1-deoxy-D-xylulose-5-phosphate (DXP) to 2-C-methyl-D-erythritol 4-phosphate (MEP). This chain is 1-deoxy-D-xylulose 5-phosphate reductoisomerase, found in Blochmanniella floridana.